Consider the following 562-residue polypeptide: AT-rich interactive domain-containing protein 1 (562 aa).

The ARID domain maps to 43–136 (KELISLFRPL…YLDAFGRWLN (94 aa)). An ELM2 domain is found at 358 to 448 (PCALVGSKFQ…KLELGPAFYM (91 aa)).

It localises to the nucleus. This Arabidopsis thaliana (Mouse-ear cress) protein is AT-rich interactive domain-containing protein 1 (ARID1).